We begin with the raw amino-acid sequence, 662 residues long: Interferon-induced GTP-binding protein Mx1 (662 aa).

Residue Met1 is modified to N-acetylmethionine. A Dynamin-type G domain is found at 67–340 (DLALPAIAVI…LITHICKSLP (274 aa)). A G1 motif region spans residues 77-84 (GDQSSGKS). Residue 77 to 84 (GDQSSGKS) coordinates GTP. The interval 102 to 104 (VTR) is G2 motif. The tract at residues 178–181 (DLPG) is G3 motif. GTP contacts are provided by residues 178–182 (DLPGI) and 247–250 (TKPD). Residues 247–250 (TKPD) are G4 motif. Residues 279 to 282 (KCRG) form a G5 motif region. Residues 341 to 366 (LLENQIRESHQRITEELQKYGVDVPE) are bundle signaling element (BSE). The segment at 366–533 (EDENEKMFFL…HFQMEQIVYC (168 aa)) is middle domain. A stalk region spans residues 367 to 632 (DENEKMFFLI…KDTYSWLLKE (266 aa)). Residues 554–557 (KKKK) are critical for lipid-binding. Residues 574–662 (MEEIFQHLMA…ARRRLAQFPG (89 aa)) form the GED domain.

The protein belongs to the TRAFAC class dynamin-like GTPase superfamily. Dynamin/Fzo/YdjA family. As to quaternary structure, homooligomer. Oligomerizes into multimeric filamentous or ring-like structures by virtue of its stalk domain. Oligomerization is critical for GTPase activity, protein stability, and recognition of viral target structures. Interacts with TRPC1, TRPC3, TRPC4, TRPC5, TRPC6 and TRPC7. Interacts with HSPA5. Interacts with TUBB/TUBB5. Interacts with DDX39A and DDX39B. Post-translationally, ISGylated.

It is found in the cytoplasm. It localises to the endoplasmic reticulum membrane. Its subcellular location is the perinuclear region. Interferon-induced dynamin-like GTPase with antiviral activity. This is Interferon-induced GTP-binding protein Mx1 (MX1) from Pongo abelii (Sumatran orangutan).